Reading from the N-terminus, the 235-residue chain is Protein RESISTANCE TO PHYTOPHTHORA 1, chloroplastic (235 aa).

A chloroplast-targeting transit peptide spans 1 to 43 (MNSATTMSASVLNYQILKFFPPQKNGFLKSPLIRGKICRFCVS). The span at 53–66 (VIEDPKEETQEKSD) shows a compositional bias: basic and acidic residues. The interval 53–92 (VIEDPKEETQEKSDGVIVNSTEEEEERSGENSTSTGPSTV) is disordered. A run of 4 helical transmembrane segments spans residues 131–151 (FEVQ…NLIF), 158–178 (IWRL…LRAR), 188–208 (LNYL…FLKS), and 211–231 (VVWS…LGWL).

The protein localises to the plastid. It localises to the chloroplast. It is found in the membrane. Its function is as follows. Plays a positive role in the immune response to the oomycetes P.infestans, including induced oxidative burst and enhanced expression of defense-related genes. This is Protein RESISTANCE TO PHYTOPHTHORA 1, chloroplastic from Solanum tuberosum (Potato).